A 245-amino-acid polypeptide reads, in one-letter code: 1-(5-phosphoribosyl)-5-[(5-phosphoribosylamino)methylideneamino] imidazole-4-carboxamide isomerase (245 aa).

D11 (proton acceptor) is an active-site residue. D132 acts as the Proton donor in catalysis.

This sequence belongs to the HisA/HisF family.

It is found in the cytoplasm. The enzyme catalyses 1-(5-phospho-beta-D-ribosyl)-5-[(5-phospho-beta-D-ribosylamino)methylideneamino]imidazole-4-carboxamide = 5-[(5-phospho-1-deoxy-D-ribulos-1-ylimino)methylamino]-1-(5-phospho-beta-D-ribosyl)imidazole-4-carboxamide. Its pathway is amino-acid biosynthesis; L-histidine biosynthesis; L-histidine from 5-phospho-alpha-D-ribose 1-diphosphate: step 4/9. In Xanthobacter autotrophicus (strain ATCC BAA-1158 / Py2), this protein is 1-(5-phosphoribosyl)-5-[(5-phosphoribosylamino)methylideneamino] imidazole-4-carboxamide isomerase.